The following is a 496-amino-acid chain: Lysine--tRNA ligase (496 aa).

Mg(2+)-binding residues include glutamate 407 and glutamate 414.

This sequence belongs to the class-II aminoacyl-tRNA synthetase family. Homodimer. The cofactor is Mg(2+).

The protein localises to the cytoplasm. The enzyme catalyses tRNA(Lys) + L-lysine + ATP = L-lysyl-tRNA(Lys) + AMP + diphosphate. The polypeptide is Lysine--tRNA ligase (Staphylococcus haemolyticus (strain JCSC1435)).